Consider the following 398-residue polypeptide: Cytohesin-1 (398 aa).

Methionine 1 carries the post-translational modification N-acetylmethionine. Positions 10 to 67 form a coiled coil; the sequence is SDLTAEERQELENIRRRKQELLADIQRLKDEIAEVANEIENLGSTEERKNMQRNKQVA. Residues 73–202 form the SEC7 domain; sequence FNMDPKKGIQ…IIMLNTSLHN (130 aa). One can recognise a PH domain in the interval 260 to 377; the sequence is NPDREGWLLK…WIKCIKAAIS (118 aa). Residues 269–277, arginine 281, tyrosine 292, arginine 302, and asparagine 351 contribute to the a 1,2-diacyl-sn-glycero-3-phospho-(1D-myo-inositol-3,4,5-trisphosphate) site; that span reads KLGGGRVKT. A C-terminal autoinhibitory region region spans residues 388–396; it reads RKKKVSSTK.

As to quaternary structure, interacts with TRIM23 and CYTIP. Interacts (via coiled-coil domain) with FRMD4A (via coiled-coil domain). Interacts with FRMD4B. Found in a complex with PARD3, CYTH1 and FRMD4A. Interacts (via N-terminal domain) with INAVA (via N-terminal domain). Ubiquitinated by SCF(FBXW11) E3 ubiquitin-protein ligase complex. Ubiquitination induces proteasomal degradation.

Its subcellular location is the cell membrane. It localises to the cytoplasm. It is found in the cytosol. The protein localises to the cell junction. The protein resides in the tight junction. Its subcellular location is the adherens junction. Its function is as follows. Promotes guanine-nucleotide exchange on ARF1, ARF5 and ARF6. Promotes the activation of ARF factors through replacement of GDP with GTP. Plays an important role in membrane trafficking, during junctional remodeling and epithelial polarization, through regulation of ARF6 activity. This Chlorocebus aethiops (Green monkey) protein is Cytohesin-1 (CYTH1).